A 325-amino-acid chain; its full sequence is MSWISPELIEILLTVLKAVVILLVVVTCGAFMSFGERRLLGLFQNRYGPNRVGWGGSLQLVADMIKMFFKEDWIPKFSDRVIFTLAPMIAFTSLLLAFAIVPVSPGWVVADLNIGILFFLMMAGLAVYAVLFAGWSSNNKYSLLGAMRASAQTLSYEVFLGLSLMGVVAQAGSFNMTDIVNSQAHVWNVIPQFFGFITFAIAGVAVCHRHPFDQPEAEQELADGYHIEYSGMKFGLFFVGEYIGIVTISALMVTLFFGGWQGPLLPPFIWFALKTAFFMMMFILIRASLPRPRYDQVMSFGWKICLPLTLINLLVTAAVILWQAQ.

8 consecutive transmembrane segments (helical) span residues 11 to 31 (ILLT…CGAF), 81 to 101 (VIFT…FAIV), 114 to 134 (IGIL…LFAG), 154 to 174 (LSYE…AGSF), 186 to 206 (VWNV…GVAV), 237 to 257 (FFVG…TLFF), 265 to 285 (LPPF…FILI), and 304 to 324 (ICLP…LWQA).

The protein belongs to the complex I subunit 1 family. As to quaternary structure, NDH-1 is composed of 13 different subunits. Subunits NuoA, H, J, K, L, M, N constitute the membrane sector of the complex.

It localises to the cell inner membrane. It catalyses the reaction a quinone + NADH + 5 H(+)(in) = a quinol + NAD(+) + 4 H(+)(out). Its function is as follows. NDH-1 shuttles electrons from NADH, via FMN and iron-sulfur (Fe-S) centers, to quinones in the respiratory chain. The immediate electron acceptor for the enzyme in this species is believed to be ubiquinone. Couples the redox reaction to proton translocation (for every two electrons transferred, four hydrogen ions are translocated across the cytoplasmic membrane), and thus conserves the redox energy in a proton gradient. This subunit may bind ubiquinone. The sequence is that of NADH-quinone oxidoreductase subunit H from Escherichia coli O45:K1 (strain S88 / ExPEC).